A 559-amino-acid chain; its full sequence is Glypican-1 (559 aa).

A signal peptide spans 1-23 (MELRARGWWLLYAAAVLVACARG). Cystine bridges form between Cys-32–Cys-68, Cys-62–Cys-256, Cys-69–Cys-259, Cys-191–Cys-343, Cys-246–Cys-279, Cys-268–Cys-415, and Cys-272–Cys-401. Residues Asn-79 and Asn-116 are each glycosylated (N-linked (GlcNAc...) asparagine). The disordered stretch occupies residues 478–539 (FQDASDDGSG…SAAAPTPPQA (62 aa)). O-linked (Xyl...) (heparan sulfate) serine glycans are attached at residues Ser-486, Ser-488, and Ser-490. A lipid anchor (GPI-anchor amidated serine) is attached at Ser-530. The propeptide at 531–559 (AAAPTPPQASPLLLLGLALALPAVAPRGR) is removed in mature form.

Belongs to the glypican family. Post-translationally, S-nitrosylated in a Cu(2+)-dependent manner. Nitric acid (NO) is released from the nitrosylated cysteines by ascorbate or by some other reducing agent, in a Cu(2+) or Zn(2+) dependent manner. This free nitric oxide is then capable of cleaving the heparan sulfate side chains. N- and O-glycosylated. N-glycosylation is mainly of the complex type containing sialic acid. O-glycosylated with heparan sulfate. The heparan sulfate chains can be cleaved either by the action of heparanase or, degraded by a deaminative process that uses nitric oxide (NO) released from the S-nitrosylated cysteines. This process is triggered by ascorbate, or by some other reducing agent, in a Cu(2+)- or Zn(2+) dependent manner. Cu(2+) ions are provided by ceruloproteins such as APP, PRNP or CP which associate with GCP1 in intracellular compartments or lipid rafts. In terms of processing, shed from the cell surface probably by further cleavage.

Its subcellular location is the cell membrane. It is found in the endosome. The protein localises to the secreted. It localises to the extracellular space. Its function is as follows. Cell surface proteoglycan that bears heparan sulfate. Binds, via the heparan sulfate side chains, alpha-4 (V) collagen and participates in Schwann cell myelination. May act as a catalyst in increasing the rate of conversion of prion protein PRPN (C) to PRNP (Sc) via associating (via the heparan sulfate side chains) with both forms of PRPN, targeting them to lipid rafts and facilitating their interaction. Required for proper skeletal muscle differentiation by sequestering FGF2 in lipid rafts preventing its binding to receptors (FGFRs) and inhibiting the FGF-mediated signaling. The chain is Glypican-1 (GPC1) from Bos taurus (Bovine).